The chain runs to 858 residues: Receptor-like protein kinase ANXUR2 (858 aa).

An N-terminal signal peptide occupies residues 1–27 (MNEKLRILFSFLCFFYVLLVSPSQSNG). Topologically, residues 28–431 (QDISLSCGAS…VKKDFQGDKR (404 aa)) are extracellular. Residues Asn133, Asn293, Asn303, and Asn331 are each glycosylated (N-linked (GlcNAc...) asparagine). The chain crosses the membrane as a helical span at residues 432-452 (ITAFVIGSAGGVAAVLFCALC). Over 453–858 (FTMYQRKRKF…FSQIVNPKGR (406 aa)) the chain is Cytoplasmic. The region spanning 521–794 (FDESNVIGVG…GDVLWNLEFA (274 aa)) is the Protein kinase domain. Residues 527–535 (IGVGGFGKV) and Lys549 contribute to the ATP site. Asp645 acts as the Proton acceptor in catalysis. The segment at 800 to 858 (TADGSRHRTPSNGGGSVDLGGGGGGVTVNISAGESDLGDDLSSEENSGIFSQIVNPKGR) is disordered. A compositionally biased stretch (gly residues) spans 811-825 (NGGGSVDLGGGGGGV). Residues 843–858 (EENSGIFSQIVNPKGR) show a composition bias toward polar residues.

The protein belongs to the protein kinase superfamily. Ser/Thr protein kinase family. Expressed in pollen, but not in pistils or seedlings.

It localises to the cell membrane. The enzyme catalyses L-seryl-[protein] + ATP = O-phospho-L-seryl-[protein] + ADP + H(+). It catalyses the reaction L-threonyl-[protein] + ATP = O-phospho-L-threonyl-[protein] + ADP + H(+). Its function is as follows. Receptor-like protein kinase that controls pollen tube behavior by directing rupture at proper timing to release the sperm cell. This chain is Receptor-like protein kinase ANXUR2 (ANX2), found in Arabidopsis thaliana (Mouse-ear cress).